Here is a 79-residue protein sequence, read N- to C-terminus: Small ribosomal subunit protein bS16c (79 aa).

The protein belongs to the bacterial ribosomal protein bS16 family.

The protein resides in the plastid. The protein localises to the chloroplast. This chain is Small ribosomal subunit protein bS16c, found in Thalassiosira pseudonana (Marine diatom).